A 494-amino-acid polypeptide reads, in one-letter code: UPF0371 protein M28_Spy1076 (494 aa).

Belongs to the UPF0371 family.

This chain is UPF0371 protein M28_Spy1076, found in Streptococcus pyogenes serotype M28 (strain MGAS6180).